We begin with the raw amino-acid sequence, 303 residues long: Geranylgeranyl pyrophosphate synthase (303 aa).

Positions 30, 33, and 62 each coordinate isopentenyl diphosphate. Residues aspartate 69 and aspartate 73 each coordinate Mg(2+). Dimethylallyl diphosphate is bound at residue arginine 78. Arginine 79 is an isopentenyl diphosphate binding site. Dimethylallyl diphosphate contacts are provided by lysine 156, threonine 157, glutamine 190, lysine 207, and lysine 217.

This sequence belongs to the FPP/GGPP synthase family. The cofactor is Mg(2+).

It localises to the cytoplasm. The enzyme catalyses isopentenyl diphosphate + dimethylallyl diphosphate = (2E)-geranyl diphosphate + diphosphate. It catalyses the reaction isopentenyl diphosphate + (2E)-geranyl diphosphate = (2E,6E)-farnesyl diphosphate + diphosphate. It carries out the reaction isopentenyl diphosphate + (2E,6E)-farnesyl diphosphate = (2E,6E,10E)-geranylgeranyl diphosphate + diphosphate. It participates in isoprenoid biosynthesis; farnesyl diphosphate biosynthesis; farnesyl diphosphate from geranyl diphosphate and isopentenyl diphosphate: step 1/1. It functions in the pathway isoprenoid biosynthesis; geranyl diphosphate biosynthesis; geranyl diphosphate from dimethylallyl diphosphate and isopentenyl diphosphate: step 1/1. Its pathway is isoprenoid biosynthesis; geranylgeranyl diphosphate biosynthesis; geranylgeranyl diphosphate from farnesyl diphosphate and isopentenyl diphosphate: step 1/1. In terms of biological role, catalyzes the trans-addition of the three molecules of IPP onto DMAPP to form geranylgeranyl pyrophosphate. This Mucor circinelloides f. lusitanicus (Mucor racemosus var. lusitanicus) protein is Geranylgeranyl pyrophosphate synthase.